The following is a 305-amino-acid chain: Ornithine carbamoyltransferase (305 aa).

Carbamoyl phosphate is bound by residues serine 52–threonine 55, glutamine 79, arginine 103, and histidine 130–glutamine 133. L-ornithine is bound by residues asparagine 161, aspartate 221, and serine 225–methionine 226. Carbamoyl phosphate is bound by residues cysteine 261–leucine 262 and arginine 289.

It belongs to the aspartate/ornithine carbamoyltransferase superfamily. OTCase family.

The protein localises to the cytoplasm. It catalyses the reaction carbamoyl phosphate + L-ornithine = L-citrulline + phosphate + H(+). It functions in the pathway amino-acid biosynthesis; L-arginine biosynthesis; L-arginine from L-ornithine and carbamoyl phosphate: step 1/3. In terms of biological role, reversibly catalyzes the transfer of the carbamoyl group from carbamoyl phosphate (CP) to the N(epsilon) atom of ornithine (ORN) to produce L-citrulline. In Methanocorpusculum labreanum (strain ATCC 43576 / DSM 4855 / Z), this protein is Ornithine carbamoyltransferase.